The chain runs to 213 residues: Protein MobE (213 aa).

The polypeptide is Protein MobE (mobE) (Acidithiobacillus ferrooxidans (Thiobacillus ferrooxidans)).